The sequence spans 519 residues: Ribonuclease Y (519 aa).

The helical transmembrane segment at 3–23 threads the bilayer; that stretch reads LIEIVLLLVGMAVGAATGFIL. The KH domain maps to 209–272; the sequence is TVTAVSLPSE…QIAKMALERL (64 aa). An HD domain is found at 335–428; that stretch reads VLQHSMEVAS…VQAADSLSGA (94 aa).

This sequence belongs to the RNase Y family.

It localises to the cell membrane. Endoribonuclease that initiates mRNA decay. The protein is Ribonuclease Y of Oleidesulfovibrio alaskensis (strain ATCC BAA-1058 / DSM 17464 / G20) (Desulfovibrio alaskensis).